The chain runs to 413 residues: MSTDPTSKPAFPITDEIRHALAVTKRGVDELLIEEEFAQKLARSAATGKPLRIKLGLDPTAPDIHLGHTVVLNKMRQLQDLGHTVIFLIGDFTSLIGDPSGRNATRPPLTREQIESNAKTYFEQAALVLDREKTEIRYNSEWSMPLGADGMIKLASRYTVARMLEREDFTKRFQGGIPISIHEFLYPLMQGYDSVALNADLELGGTDQKFNLLVGRELQKQYGQEQQCILTMPLLEGLDGVEKMSKSKGNYVGIGEKPNDMFGKLMSISDVLMWRYFELLSFRSLDEIARLRGEAEGGRNPRDFKVMLAQEIVARFHSQADAERALEDFNHRAKGGVPDDIPTVTLAGAPLAIGQLLKQAGLVPSTSEALRNIEQGGVKIDGATVSDKALKVDAGEFVVQVGKRRFARVTLTA.

The 'HIGH' region signature appears at 59–68 (PTAPDIHLGH). The 'KMSKS' region signature appears at 243–247 (KMSKS). K246 is an ATP binding site. An S4 RNA-binding domain is found at 351–411 (LAIGQLLKQA…GKRRFARVTL (61 aa)).

This sequence belongs to the class-I aminoacyl-tRNA synthetase family. TyrS type 2 subfamily. Homodimer.

It is found in the cytoplasm. It carries out the reaction tRNA(Tyr) + L-tyrosine + ATP = L-tyrosyl-tRNA(Tyr) + AMP + diphosphate + H(+). Functionally, catalyzes the attachment of tyrosine to tRNA(Tyr) in a two-step reaction: tyrosine is first activated by ATP to form Tyr-AMP and then transferred to the acceptor end of tRNA(Tyr). In Burkholderia thailandensis (strain ATCC 700388 / DSM 13276 / CCUG 48851 / CIP 106301 / E264), this protein is Tyrosine--tRNA ligase.